A 235-amino-acid chain; its full sequence is Phosphoribosylaminoimidazole-succinocarboxamide synthase (235 aa).

This sequence belongs to the SAICAR synthetase family.

The catalysed reaction is 5-amino-1-(5-phospho-D-ribosyl)imidazole-4-carboxylate + L-aspartate + ATP = (2S)-2-[5-amino-1-(5-phospho-beta-D-ribosyl)imidazole-4-carboxamido]succinate + ADP + phosphate + 2 H(+). Its pathway is purine metabolism; IMP biosynthesis via de novo pathway; 5-amino-1-(5-phospho-D-ribosyl)imidazole-4-carboxamide from 5-amino-1-(5-phospho-D-ribosyl)imidazole-4-carboxylate: step 1/2. The polypeptide is Phosphoribosylaminoimidazole-succinocarboxamide synthase (Streptococcus pneumoniae serotype 19F (strain G54)).